The sequence spans 110 residues: MRVKMHVKKGDTVLVASGKYKGRVGKVKEVLPKKYAVIVEGVNIVKKAVRVSPKYPQGGFIEKEAPLHASKVRPICPACGKPTRVRKKFLENGKKIRVCAKCGGALDTEE.

Belongs to the universal ribosomal protein uL24 family. Part of the 50S ribosomal subunit.

One of two assembly initiator proteins, it binds directly to the 5'-end of the 23S rRNA, where it nucleates assembly of the 50S subunit. In terms of biological role, one of the proteins that surrounds the polypeptide exit tunnel on the outside of the subunit. The chain is Large ribosomal subunit protein uL24 from Thermus thermophilus (strain ATCC BAA-163 / DSM 7039 / HB27).